Reading from the N-terminus, the 65-residue chain is Large ribosomal subunit protein bL35 (65 aa).

The span at 1–16 shows a compositional bias: basic residues; that stretch reads MPKQKTHRASAKRFKR. A disordered region spans residues 1 to 21; that stretch reads MPKQKTHRASAKRFKRTGSGG.

This sequence belongs to the bacterial ribosomal protein bL35 family.

In Streptococcus pyogenes serotype M18 (strain MGAS8232), this protein is Large ribosomal subunit protein bL35.